Reading from the N-terminus, the 67-residue chain is Large ribosomal subunit protein bL35 (67 aa).

This sequence belongs to the bacterial ribosomal protein bL35 family.

The protein is Large ribosomal subunit protein bL35 of Rickettsia prowazekii (strain Madrid E).